A 217-amino-acid chain; its full sequence is Probable transaldolase (217 aa).

Lys83 acts as the Schiff-base intermediate with substrate in catalysis.

It belongs to the transaldolase family. Type 3B subfamily.

It is found in the cytoplasm. It catalyses the reaction D-sedoheptulose 7-phosphate + D-glyceraldehyde 3-phosphate = D-erythrose 4-phosphate + beta-D-fructose 6-phosphate. The protein operates within carbohydrate degradation; pentose phosphate pathway; D-glyceraldehyde 3-phosphate and beta-D-fructose 6-phosphate from D-ribose 5-phosphate and D-xylulose 5-phosphate (non-oxidative stage): step 2/3. In terms of biological role, transaldolase is important for the balance of metabolites in the pentose-phosphate pathway. This chain is Probable transaldolase, found in Coprothermobacter proteolyticus (strain ATCC 35245 / DSM 5265 / OCM 4 / BT).